A 183-amino-acid polypeptide reads, in one-letter code: Apo-citrate lyase phosphoribosyl-dephospho-CoA transferase (183 aa).

It belongs to the CitX family.

It catalyses the reaction apo-[citrate lyase ACP] + 2'-(5''-triphospho-alpha-D-ribosyl)-3'-dephospho-CoA = holo-[citrate lyase ACP] + diphosphate. Its function is as follows. Transfers 2-(5''-triphosphoribosyl)-3'-dephosphocoenzyme-A on a serine residue to the apo-acyl carrier protein (gamma chain) of the citrate lyase to yield holo-acyl carrier protein. The chain is Apo-citrate lyase phosphoribosyl-dephospho-CoA transferase from Shigella flexneri serotype 5b (strain 8401).